Consider the following 262-residue polypeptide: Inner membrane protein YcfZ (262 aa).

Residues 1 to 4 are Cytoplasmic-facing; it reads MKKF. Residues 5–27 traverse the membrane as a helical segment; it reads IILLSLLILLPLTAASKPLIPIM. Over 28 to 182 the chain is Periplasmic; that stretch reads KTLFTDVTGT…HENAPPGSTN (155 aa). A helical membrane pass occupies residues 183 to 202; that stretch reads TLGFIAWAATFILFSRIFYY. Over 203–206 the chain is Cytoplasmic; that stretch reads TTRF. The helical transmembrane segment at 207-229 threads the bilayer; it reads IYALKFAVAMTIANMGYQALCLY. The Periplasmic segment spans residues 230-238; it reads IDNSFAITR. A helical membrane pass occupies residues 239–258; sequence ISPLWAGLIGVCTFIAALLL. Topologically, residues 259-262 are cytoplasmic; that stretch reads TSKR.

The protein localises to the cell inner membrane. This Escherichia coli (strain K12) protein is Inner membrane protein YcfZ (ycfZ).